A 119-amino-acid polypeptide reads, in one-letter code: Large ribosomal subunit protein bL20 (119 aa).

The protein belongs to the bacterial ribosomal protein bL20 family.

Its function is as follows. Binds directly to 23S ribosomal RNA and is necessary for the in vitro assembly process of the 50S ribosomal subunit. It is not involved in the protein synthesizing functions of that subunit. This is Large ribosomal subunit protein bL20 (rplT) from Geobacillus stearothermophilus (Bacillus stearothermophilus).